The sequence spans 406 residues: Diaminopimelate decarboxylase (406 aa).

N6-(pyridoxal phosphate)lysine is present on K52. Pyridoxal 5'-phosphate is bound by residues G231 and 265 to 268 (EPGR). Substrate contacts are provided by R268, R304, and Y308. C334 (proton donor) is an active-site residue. Positions 335 and 362 each coordinate substrate. Y362 is a pyridoxal 5'-phosphate binding site.

It belongs to the Orn/Lys/Arg decarboxylase class-II family. LysA subfamily. Homodimer. Pyridoxal 5'-phosphate serves as cofactor.

The catalysed reaction is meso-2,6-diaminopimelate + H(+) = L-lysine + CO2. It functions in the pathway amino-acid biosynthesis; L-lysine biosynthesis via DAP pathway; L-lysine from DL-2,6-diaminopimelate: step 1/1. Specifically catalyzes the decarboxylation of meso-diaminopimelate (meso-DAP) to L-lysine. This is Diaminopimelate decarboxylase from Neisseria meningitidis serogroup A / serotype 4A (strain DSM 15465 / Z2491).